A 225-amino-acid polypeptide reads, in one-letter code: UPF0758 protein BCG9842_B0662 (225 aa).

Residues 103 to 225 form the MPN domain; sequence SIRSPEDCAK…FVSLKEKGHI (123 aa). Zn(2+) contacts are provided by histidine 174, histidine 176, and aspartate 187. Residues 174-187 carry the JAMM motif motif; it reads HNHPSGDPTPSRED.

Belongs to the UPF0758 family.

The polypeptide is UPF0758 protein BCG9842_B0662 (Bacillus cereus (strain G9842)).